We begin with the raw amino-acid sequence, 192 residues long: Ubiquitin-conjugating enzyme E2 T (192 aa).

Positions 2-152 (QRVSRLKREL…AKKWTEKHAL (151 aa)) constitute a UBC core domain. C86 (glycyl thioester intermediate) is an active-site residue. The interval 150-192 (HALPAPQGSDKESQEKSGSSEGTSHKRKSAEIAEESKKPCREP) is disordered. Residues 178-192 (SAEIAEESKKPCREP) show a composition bias toward basic and acidic residues.

Belongs to the ubiquitin-conjugating enzyme family.

It localises to the nucleus. The catalysed reaction is S-ubiquitinyl-[E1 ubiquitin-activating enzyme]-L-cysteine + [E2 ubiquitin-conjugating enzyme]-L-cysteine = [E1 ubiquitin-activating enzyme]-L-cysteine + S-ubiquitinyl-[E2 ubiquitin-conjugating enzyme]-L-cysteine.. The protein operates within protein modification; protein ubiquitination. Functionally, accepts ubiquitin from the E1 complex and catalyzes its covalent attachment to other proteins. Catalyzes monoubiquitination. Involved in DNA repair. This is Ubiquitin-conjugating enzyme E2 T (ube2t) from Xenopus laevis (African clawed frog).